The following is a 213-amino-acid chain: ATP synthase peripheral stalk subunit OSCP, mitochondrial (213 aa).

The N-terminal 23 residues, 1–23, are a transit peptide targeting the mitochondrion; that stretch reads MASQAVSGLSRQVRCFSTSVVRP. An SIFI-degron motif is present at residues 5–23; the sequence is AVSGLSRQVRCFSTSVVRP. Residues K54, K60, K70, and K73 each carry the N6-acetyllysine modification. At K90 the chain carries N6-succinyllysine. An N6-acetyllysine; alternate mark is found at K100, K158, and K162. An N6-succinyllysine; alternate mark is found at K100, K158, and K162. 3 positions are modified to N6-acetyllysine: K172, K176, and K192. K199 carries the N6-succinyllysine modification.

Belongs to the ATPase delta chain family. Component of the ATP synthase complex composed at least of ATP5F1A/subunit alpha, ATP5F1B/subunit beta, ATP5MC1/subunit c (homooctomer), MT-ATP6/subunit a, MT-ATP8/subunit 8, ATP5ME/subunit e, ATP5MF/subunit f, ATP5MG/subunit g, ATP5MK/subunit k, ATP5MJ/subunit j, ATP5F1C/subunit gamma, ATP5F1D/subunit delta, ATP5F1E/subunit epsilon, ATP5PF/subunit F6, ATP5PB/subunit b, ATP5PD/subunit d, ATP5PO/subunit OSCP. ATP synthase complex consists of a soluble F(1) head domain (subunits alpha(3) and beta(3)) - the catalytic core - and a membrane F(0) domain - the membrane proton channel (subunits c, a, 8, e, f, g, k and j). These two domains are linked by a central stalk (subunits gamma, delta, and epsilon) rotating inside the F1 region and a stationary peripheral stalk (subunits F6, b, d, and OSCP). Post-translationally, acetylation at Lys-162 decreases ATP production. Deacetylated by SIRT3. In response to mitochondrial stress, the precursor protein is ubiquitinated by the SIFI complex in the cytoplasm before mitochondrial import, leading to its degradation. Within the SIFI complex, UBR4 initiates ubiquitin chain that are further elongated or branched by KCMF1.

It localises to the mitochondrion. Its subcellular location is the mitochondrion inner membrane. Functionally, subunit OSCP, of the mitochondrial membrane ATP synthase complex (F(1)F(0) ATP synthase or Complex V) that produces ATP from ADP in the presence of a proton gradient across the membrane which is generated by electron transport complexes of the respiratory chain. ATP synthase complex consist of a soluble F(1) head domain - the catalytic core - and a membrane F(1) domain - the membrane proton channel. These two domains are linked by a central stalk rotating inside the F(1) region and a stationary peripheral stalk. During catalysis, ATP synthesis in the catalytic domain of F(1) is coupled via a rotary mechanism of the central stalk subunits to proton translocation. In vivo, can only synthesize ATP although its ATP hydrolase activity can be activated artificially in vitro. Part of the complex F(0) domain. Part of the complex F(0) domain and the peripheric stalk, which acts as a stator to hold the catalytic alpha(3)beta(3) subcomplex and subunit a/ATP6 static relative to the rotary elements. The sequence is that of ATP synthase peripheral stalk subunit OSCP, mitochondrial from Sus scrofa (Pig).